We begin with the raw amino-acid sequence, 404 residues long: Glycosylated lysosomal membrane protein (404 aa).

A signal peptide spans 1 to 35 (MFRCWGPHWGWVPCAPTPWLLLSLLVCSAPFGLQG). Over 36–370 (EETRQVSMEV…VDIFSPLVLG (335 aa)) the chain is Lumenal. 9 N-linked (GlcNAc...) asparagine glycosylation sites follow: N64, N85, N94, N133, N157, N166, N185, N228, and N331. Residues 371–391 (IMAVALGAPGLMFLGGGLFLL) traverse the membrane as a helical segment. Topologically, residues 392-404 (LRHRRYSEYQSIN) are cytoplasmic. Residues 400-404 (YQSIN) carry the Lysosomal targeting motif motif.

It belongs to the GLMP family. In terms of assembly, interacts (via lumenal domain) with lysosomal protein MFSD1; the interaction starts while both proteins are still in the endoplasmic reticulum and is required for stabilization of MFSD1 in lysosomes but has no direct effect on its targeting to lysosomes or transporter activity. Highly N-glycosylated. N-glycosylation is essential for GLMP stability and for MFSD1 lysosomal localization. As to expression, detected in brain, heart, liver, kidney, lung, intestine, testis and spleen. Expressed at highest levels in kidney cortex. However, another study reports highest expression levels in lung. Expressed in myoblasts with expression increasing during differentiation into myotubes.

The protein localises to the lysosome membrane. Required to protect lysosomal transporter MFSD1 from lysosomal proteolysis and for MFSD1 lysosomal localization. This Mus musculus (Mouse) protein is Glycosylated lysosomal membrane protein.